We begin with the raw amino-acid sequence, 202 residues long: Matrix protein (202 aa).

The tract at residues 14–33 (EDTQKPSPASAPPDGDDLWL) is disordered. The short motif at 35–38 (PPEY) is the PPXY motif element. Positions 115-151 (KLRRTLIFQWADSRGPLEGEELEHSQEITWDDDTEFV) are essential for glycoprotein binding.

Belongs to the lyssavirus matrix protein family. In terms of assembly, homomultimer. Interacts with nucleoprotein and with the cytoplasmic domain of glycoprotein. Interacts with host ATP6V1A; this interaction plays an important role in virion uncoating after viral entry.

It localises to the virion membrane. Its subcellular location is the host endomembrane system. It is found in the host cytoplasm. Functionally, plays a major role in assembly, budding and uncoating of virion after membrane fusion. Completely covers the ribonucleoprotein coil and keep it in condensed bullet-shaped form. Inhibits viral transcription and stimulates replication. Plays a major role in early induction of TRAIL-mediated apoptosis in infected neurons. Inhibits the integrated stress response (ISR) in the infected cell by blocking the formation of stress granules. This Rabies virus (strain HEP-Flury) (RABV) protein is Matrix protein (M).